Here is a 53-residue protein sequence, read N- to C-terminus: Large ribosomal subunit protein uL30 (53 aa).

Belongs to the universal ribosomal protein uL30 family. As to quaternary structure, part of the 50S ribosomal subunit.

The chain is Large ribosomal subunit protein uL30 from Deinococcus geothermalis (strain DSM 11300 / CIP 105573 / AG-3a).